A 628-amino-acid polypeptide reads, in one-letter code: Probable alpha-L-arabinofuranosidase A (628 aa).

A signal peptide spans 1 to 25 (MVAFSALSGVSAVSLLLSLVQNAHG). Residues Asn36, Asn51, Asn74, Asn152, Asn171, Asn260, Asn359, Asn440, Asn493, and Asn610 are each glycosylated (N-linked (GlcNAc...) asparagine).

It belongs to the glycosyl hydrolase 51 family.

It is found in the secreted. It catalyses the reaction Hydrolysis of terminal non-reducing alpha-L-arabinofuranoside residues in alpha-L-arabinosides.. Its pathway is glycan metabolism; L-arabinan degradation. Its function is as follows. Alpha-L-arabinofuranosidase involved in the degradation of arabinoxylan, a major component of plant hemicellulose. Acts only on small linear 1,5-alpha-linked L-arabinofuranosyl oligosaccharides. The protein is Probable alpha-L-arabinofuranosidase A (abfA) of Aspergillus niger (strain ATCC MYA-4892 / CBS 513.88 / FGSC A1513).